The following is a 111-amino-acid chain: uncharacterized protein (111 aa).

G2 is lipidated: N-myristoyl glycine; by host.

This is an uncharacterized protein from Acanthamoeba polyphaga mimivirus (APMV).